A 600-amino-acid chain; its full sequence is ATP-dependent lipid A-core flippase (600 aa).

6 helical membrane-spanning segments follow: residues 28–48 (TLSI…IAFI), 80–100 (VMLM…VANF), 159–179 (ALIS…LMFF), 182–202 (WKLS…ISIV), 267–287 (VSQP…LYAA), and 295–315 (ELTA…LQPI). Residues 29-327 (LSILGLIVYG…LTRVNAEFQR (299 aa)) form the ABC transmembrane type-1 domain. Residues 359 to 596 (LRFDNVSFSY…KGAYAGLYQM (238 aa)) enclose the ABC transporter domain. Position 393-400 (393-400 (GRSGSGKS)) interacts with ATP.

It belongs to the ABC transporter superfamily. Lipid exporter (TC 3.A.1.106) family. As to quaternary structure, homodimer.

The protein localises to the cell inner membrane. It carries out the reaction ATP + H2O + lipid A-core oligosaccharideSide 1 = ADP + phosphate + lipid A-core oligosaccharideSide 2.. Functionally, involved in lipopolysaccharide (LPS) biosynthesis. Translocates lipid A-core from the inner to the outer leaflet of the inner membrane. Transmembrane domains (TMD) form a pore in the inner membrane and the ATP-binding domain (NBD) is responsible for energy generation. The sequence is that of ATP-dependent lipid A-core flippase from Shewanella denitrificans (strain OS217 / ATCC BAA-1090 / DSM 15013).